The sequence spans 156 residues: Small ribosomal subunit protein uS7 (156 aa).

Belongs to the universal ribosomal protein uS7 family. Part of the 30S ribosomal subunit. Contacts proteins S9 and S11.

Functionally, one of the primary rRNA binding proteins, it binds directly to 16S rRNA where it nucleates assembly of the head domain of the 30S subunit. Is located at the subunit interface close to the decoding center, probably blocks exit of the E-site tRNA. This chain is Small ribosomal subunit protein uS7, found in Yersinia enterocolitica serotype O:8 / biotype 1B (strain NCTC 13174 / 8081).